Consider the following 261-residue polypeptide: Cytochrome c oxidase subunit 3 (261 aa).

Residues 1-15 are Mitochondrial matrix-facing; the sequence is MTHQSHAYHMVKPSP. Residues 16-34 traverse the membrane as a helical segment; that stretch reads WPLTGALSALLMTSGLAMW. Residues 35 to 40 are Mitochondrial intermembrane-facing; the sequence is FHFYST. The helical transmembrane segment at 41–66 threads the bilayer; sequence TLLTLGLLTNTLTMYQWWRDVMREGT. At 67-72 the chain is on the mitochondrial matrix side; it reads YQGHHT. Residues 73 to 105 form a helical membrane-spanning segment; it reads PPVQKGLRYGMILFITSEVFFFAGFFWAFYHSS. The Mitochondrial intermembrane segment spans residues 106–128; the sequence is LAPTPQLGGHWPPTGITPLNPLE. The chain crosses the membrane as a helical span at residues 129–152; that stretch reads VPLLNTSVLLASGVSITWAHHSLM. At 153-155 the chain is on the mitochondrial matrix side; the sequence is ENN. The helical transmembrane segment at 156–183 threads the bilayer; the sequence is RNQMIQALLITILLGLYFTLLQASEYFE. Over 184-190 the chain is Mitochondrial intermembrane; the sequence is SPFTISD. A helical transmembrane segment spans residues 191–223; that stretch reads GIYGSTFFVATGFHGLHVIIGSTFLTICLIRQL. The Mitochondrial matrix portion of the chain corresponds to 224–232; that stretch reads MFHFTSKHH. The chain crosses the membrane as a helical span at residues 233-256; the sequence is FGFQAAAWYWHFVDVVWLFLYVSI. The Mitochondrial intermembrane portion of the chain corresponds to 257–261; the sequence is YWWGS.

The protein belongs to the cytochrome c oxidase subunit 3 family. Component of the cytochrome c oxidase (complex IV, CIV), a multisubunit enzyme composed of 14 subunits. The complex is composed of a catalytic core of 3 subunits MT-CO1, MT-CO2 and MT-CO3, encoded in the mitochondrial DNA, and 11 supernumerary subunits COX4I, COX5A, COX5B, COX6A, COX6B, COX6C, COX7A, COX7B, COX7C, COX8 and NDUFA4, which are encoded in the nuclear genome. The complex exists as a monomer or a dimer and forms supercomplexes (SCs) in the inner mitochondrial membrane with NADH-ubiquinone oxidoreductase (complex I, CI) and ubiquinol-cytochrome c oxidoreductase (cytochrome b-c1 complex, complex III, CIII), resulting in different assemblies (supercomplex SCI(1)III(2)IV(1) and megacomplex MCI(2)III(2)IV(2)).

The protein localises to the mitochondrion inner membrane. It catalyses the reaction 4 Fe(II)-[cytochrome c] + O2 + 8 H(+)(in) = 4 Fe(III)-[cytochrome c] + 2 H2O + 4 H(+)(out). Component of the cytochrome c oxidase, the last enzyme in the mitochondrial electron transport chain which drives oxidative phosphorylation. The respiratory chain contains 3 multisubunit complexes succinate dehydrogenase (complex II, CII), ubiquinol-cytochrome c oxidoreductase (cytochrome b-c1 complex, complex III, CIII) and cytochrome c oxidase (complex IV, CIV), that cooperate to transfer electrons derived from NADH and succinate to molecular oxygen, creating an electrochemical gradient over the inner membrane that drives transmembrane transport and the ATP synthase. Cytochrome c oxidase is the component of the respiratory chain that catalyzes the reduction of oxygen to water. Electrons originating from reduced cytochrome c in the intermembrane space (IMS) are transferred via the dinuclear copper A center (CU(A)) of subunit 2 and heme A of subunit 1 to the active site in subunit 1, a binuclear center (BNC) formed by heme A3 and copper B (CU(B)). The BNC reduces molecular oxygen to 2 water molecules using 4 electrons from cytochrome c in the IMS and 4 protons from the mitochondrial matrix. This is Cytochrome c oxidase subunit 3 (MT-CO3) from Pan troglodytes (Chimpanzee).